A 353-amino-acid chain; its full sequence is Protein RecA (353 aa).

64 to 71 (GPESSGKT) serves as a coordination point for ATP. Positions 331-353 (LEEASAQKEEVPVEDKLFDDELE) are disordered. The segment covering 335–346 (SAQKEEVPVEDK) has biased composition (basic and acidic residues).

This sequence belongs to the RecA family.

Its subcellular location is the cytoplasm. In terms of biological role, can catalyze the hydrolysis of ATP in the presence of single-stranded DNA, the ATP-dependent uptake of single-stranded DNA by duplex DNA, and the ATP-dependent hybridization of homologous single-stranded DNAs. It interacts with LexA causing its activation and leading to its autocatalytic cleavage. This Macrococcus caseolyticus (strain JCSC5402) (Macrococcoides caseolyticum) protein is Protein RecA.